The sequence spans 514 residues: Beta-galactoside alpha-2,6-sialyltransferase 2 (514 aa).

The Cytoplasmic portion of the chain corresponds to 1–10; sequence MKSSLKQWRR. A helical; Signal-anchor for type II membrane protein transmembrane segment spans residues 11–31; the sequence is LALGLILVWALLFLALLSYFM. The Lumenal portion of the chain corresponds to 32–514; it reads ESRVDDPHAA…PGFNKVHCEP (483 aa). Residues 70–92 are compositionally biased toward low complexity; sequence ATSSAPSTSSNTQQEQSQEENPS. Residues 70 to 183 are disordered; sequence ATSSAPSTSS…TKRVARHGSS (114 aa). Polar residues predominate over residues 119–132; sequence FGTQDVGSRSTGVS. Residues 145–166 show a composition bias toward acidic residues; it reads PQEDEDEEEEVIGGEEEDEEGG. Intrachain disulfides connect cysteine 246-cysteine 512, cysteine 289-cysteine 441, and cysteine 459-cysteine 470. 3 N-linked (GlcNAc...) asparagine glycosylation sites follow: asparagine 330, asparagine 350, and asparagine 357.

The protein belongs to the glycosyltransferase 29 family.

It is found in the golgi apparatus. The protein resides in the golgi stack membrane. It carries out the reaction a beta-D-galactoside + CMP-N-acetyl-beta-neuraminate = an N-acetyl-alpha-neuraminyl-(2-&gt;6)-beta-D-galactosyl derivative + CMP + H(+). Functionally, transfers sialic acid from the donor of substrate CMP-sialic acid to galactose containing acceptor substrates. The sequence is that of Beta-galactoside alpha-2,6-sialyltransferase 2 (st6gal2) from Danio rerio (Zebrafish).